Reading from the N-terminus, the 685-residue chain is Putative alpha-1,3-mannosyltransferase MNN14 (685 aa).

The Cytoplasmic portion of the chain corresponds to 1–13 (MGLLSIPYQSKSK). The helical transmembrane segment at 14–34 (LWIAIFLVVWSLISMHFIWQS) threads the bilayer. Topologically, residues 35–685 (QANSGLILKN…EIWMRGYNYL (651 aa)) are lumenal. N-linked (GlcNAc...) asparagine glycans are attached at residues asparagine 199, asparagine 338, asparagine 408, and asparagine 556.

It belongs to the MNN1/MNT family.

The protein localises to the golgi apparatus membrane. The protein operates within protein modification; protein glycosylation. Responsible for addition of the terminal mannose residues to the outer chain of core N-linked polysaccharides and to O-linked mannotriose. Implicated in late Golgi modifications. Involved in virulence. The protein is Putative alpha-1,3-mannosyltransferase MNN14 (MNN14) of Candida albicans (strain SC5314 / ATCC MYA-2876) (Yeast).